A 371-amino-acid chain; its full sequence is Cytochrome b (371 aa).

4 helical membrane passes run 25–45 (FGSM…FLAV), 69–90 (WMMQ…YIHI), 105–125 (WLSG…GYVL), and 170–190 (FFAL…LHIM). Heme b-binding residues include His-75 and His-89. Heme b-binding residues include His-174 and His-188. Residue His-193 coordinates a ubiquinone. A run of 4 helical transmembrane segments spans residues 218-238 (YKDL…VSFL), 280-300 (LGGA…PFTH), 312-332 (IMQL…WAAT), and 339-358 (FTMI…IMNP).

Belongs to the cytochrome b family. As to quaternary structure, the cytochrome bc1 complex contains 3 respiratory subunits (MT-CYB, CYC1 and UQCRFS1), 2 core proteins (UQCRC1 and UQCRC2) and probably 6 low-molecular weight proteins. The cofactor is heme b.

The protein resides in the mitochondrion inner membrane. Functionally, component of the ubiquinol-cytochrome c reductase complex (complex III or cytochrome b-c1 complex) that is part of the mitochondrial respiratory chain. The b-c1 complex mediates electron transfer from ubiquinol to cytochrome c. Contributes to the generation of a proton gradient across the mitochondrial membrane that is then used for ATP synthesis. The chain is Cytochrome b (MT-CYB) from Eryx miliaris (Desert sand boa).